We begin with the raw amino-acid sequence, 290 residues long: Membrane protein insertase YidC 1 (290 aa).

The first 19 residues, 1–19, serve as a signal peptide directing secretion; the sequence is MKKKALLPLFLGIMIFLAG. The N-palmitoyl cysteine moiety is linked to residue Cys20. Cys20 carries the S-diacylglycerol cysteine lipid modification. A run of 5 helical transmembrane segments spans residues 56 to 76, 134 to 154, 176 to 196, 211 to 231, and 232 to 252; these read FGLA…PFML, MLGC…YFVL, PDIW…VVSS, MVIS…ALGL, and YWSV…IYYS. The tract at residues 270–290 is disordered; it reads HNPYSKKKGKNTQVVSKKNKK. Over residues 280–290 the composition is skewed to polar residues; that stretch reads NTQVVSKKNKK.

Belongs to the OXA1/ALB3/YidC family. Type 2 subfamily.

The protein localises to the cell membrane. Functionally, required for the insertion and/or proper folding and/or complex formation of integral membrane proteins into the membrane. Involved in integration of membrane proteins that insert both dependently and independently of the Sec translocase complex, as well as at least some lipoproteins. The sequence is that of Membrane protein insertase YidC 1 from Staphylococcus epidermidis (strain ATCC 12228 / FDA PCI 1200).